The primary structure comprises 660 residues: Bifunctional polymyxin resistance protein ArnA (660 aa).

Residues Met-1 to Leu-304 are formyltransferase ArnAFT. A (6R)-10-formyltetrahydrofolate-binding site is contributed by His-86 to Ile-88. The Proton donor; for formyltransferase activity role is filled by His-104. (6R)-10-formyltetrahydrofolate-binding positions include Arg-114 and Val-136–Asp-140. Positions Arg-314 to Ser-660 are dehydrogenase ArnADH. NAD(+) contacts are provided by residues Asp-347 and Asp-368–Ile-369. Residues Ala-393, Tyr-398, and Thr-432–Ser-433 contribute to the UDP-alpha-D-glucuronate site. The active-site Proton acceptor; for decarboxylase activity is the Glu-434. UDP-alpha-D-glucuronate is bound by residues Arg-460, Asn-492, Lys-526 to Arg-535, and Tyr-613. The active-site Proton donor; for decarboxylase activity is the Arg-619.

In the N-terminal section; belongs to the Fmt family. UDP-L-Ara4N formyltransferase subfamily. This sequence in the C-terminal section; belongs to the NAD(P)-dependent epimerase/dehydratase family. UDP-glucuronic acid decarboxylase subfamily. As to quaternary structure, homohexamer, formed by a dimer of trimers.

It catalyses the reaction UDP-alpha-D-glucuronate + NAD(+) = UDP-beta-L-threo-pentopyranos-4-ulose + CO2 + NADH. The catalysed reaction is UDP-4-amino-4-deoxy-beta-L-arabinose + (6R)-10-formyltetrahydrofolate = UDP-4-deoxy-4-formamido-beta-L-arabinose + (6S)-5,6,7,8-tetrahydrofolate + H(+). The protein operates within nucleotide-sugar biosynthesis; UDP-4-deoxy-4-formamido-beta-L-arabinose biosynthesis; UDP-4-deoxy-4-formamido-beta-L-arabinose from UDP-alpha-D-glucuronate: step 1/3. Its pathway is nucleotide-sugar biosynthesis; UDP-4-deoxy-4-formamido-beta-L-arabinose biosynthesis; UDP-4-deoxy-4-formamido-beta-L-arabinose from UDP-alpha-D-glucuronate: step 3/3. It functions in the pathway bacterial outer membrane biogenesis; lipopolysaccharide biosynthesis. Functionally, bifunctional enzyme that catalyzes the oxidative decarboxylation of UDP-glucuronic acid (UDP-GlcUA) to UDP-4-keto-arabinose (UDP-Ara4O) and the addition of a formyl group to UDP-4-amino-4-deoxy-L-arabinose (UDP-L-Ara4N) to form UDP-L-4-formamido-arabinose (UDP-L-Ara4FN). The modified arabinose is attached to lipid A and is required for resistance to polymyxin and cationic antimicrobial peptides. In Shigella sonnei (strain Ss046), this protein is Bifunctional polymyxin resistance protein ArnA.